We begin with the raw amino-acid sequence, 436 residues long: Testican-3 (436 aa).

Positions 1–22 (MLKVSALLCVCAAAWCSQTLAA) are cleaved as a signal peptide. 8 disulfide bridges follow: C90-C101, C95-C111, C139-C169, C142-C162, C151-C183, C317-C341, C352-C359, and C361-C380. One can recognise a Kazal-like domain in the interval 133–185 (GLPSSTCKPCPIAYASPVCGSDGHSYSSQCKLEYQACVLGKQISIKCEGRCPC). In terms of domain architecture, Thyroglobulin type-1 spans 314–380 (DPPCHTELSN…GSRINGVADC (67 aa)). Residues S387 and S392 are each glycosylated (O-linked (Xyl...) (glycosaminoglycan) serine). The tract at residues 393-436 (GDFREWTDDEGEEDDIMNDKDDIEDDDEDEGDDDDDGDVHDGYI) is disordered. Positions 399-430 (TDDEGEEDDIMNDKDDIEDDDEDEGDDDDDGD) are enriched in acidic residues.

Contains chondroitin sulfate and heparan sulfate O-linked oligosaccharides. In terms of tissue distribution, expressed in brain.

The protein resides in the secreted. Its subcellular location is the extracellular space. It localises to the extracellular matrix. Its function is as follows. May participate in diverse steps of neurogenesis. Inhibits the processing of pro-matrix metalloproteinase 2 (MMP-2) by MT1-MMP and MT3-MMP. May interfere with tumor invasion. This is Testican-3 (Spock3) from Mus musculus (Mouse).